Here is a 279-residue protein sequence, read N- to C-terminus: Large ribosomal subunit protein uL2 (279 aa).

2 disordered regions span residues 29–59 (PEKSLLRPLHKTGGRNNSGKITTRHKGGGHK) and 224–279 (VAMN…KNKR). The segment covering 50-59 (TTRHKGGGHK) has biased composition (basic residues). Residues 253-268 (PEGRTRRPNKESDKLI) show a composition bias toward basic and acidic residues. Residues 269 to 279 (VRRRRTGKNKR) are compositionally biased toward basic residues.

It belongs to the universal ribosomal protein uL2 family. Part of the 50S ribosomal subunit. Forms a bridge to the 30S subunit in the 70S ribosome.

One of the primary rRNA binding proteins. Required for association of the 30S and 50S subunits to form the 70S ribosome, for tRNA binding and peptide bond formation. It has been suggested to have peptidyltransferase activity; this is somewhat controversial. Makes several contacts with the 16S rRNA in the 70S ribosome. In Paenarthrobacter aurescens (strain TC1), this protein is Large ribosomal subunit protein uL2.